The chain runs to 249 residues: 3-deoxy-D-manno-octulosonic acid kinase (249 aa).

Asp175 is a catalytic residue.

The protein belongs to the protein kinase superfamily. KdkA/RfaP family.

Its subcellular location is the cell inner membrane. It carries out the reaction an alpha-Kdo-(2-&gt;6)-lipid IVA + ATP = a 4-O-phospho-alpha-Kdo-(2-&gt;6)-lipid IVA + ADP + H(+). The protein operates within bacterial outer membrane biogenesis; LPS core biosynthesis. In terms of biological role, catalyzes the ATP-dependent phosphorylation of the 3-deoxy-D-manno-octulosonic acid (Kdo) residue in Kdo-lipid IV(A) at the 4-OH position. This chain is 3-deoxy-D-manno-octulosonic acid kinase, found in Stenotrophomonas maltophilia (strain K279a).